Reading from the N-terminus, the 91-residue chain is DNA-directed RNA polymerase subunit omega (91 aa).

It belongs to the RNA polymerase subunit omega family. As to quaternary structure, the RNAP catalytic core consists of 2 alpha, 1 beta, 1 beta' and 1 omega subunit. When a sigma factor is associated with the core the holoenzyme is formed, which can initiate transcription.

It carries out the reaction RNA(n) + a ribonucleoside 5'-triphosphate = RNA(n+1) + diphosphate. Its function is as follows. Promotes RNA polymerase assembly. Latches the N- and C-terminal regions of the beta' subunit thereby facilitating its interaction with the beta and alpha subunits. This Erwinia tasmaniensis (strain DSM 17950 / CFBP 7177 / CIP 109463 / NCPPB 4357 / Et1/99) protein is DNA-directed RNA polymerase subunit omega.